The chain runs to 198 residues: Na(+)-translocating NADH-quinone reductase subunit E (198 aa).

6 helical membrane-spanning segments follow: residues 11–31 (SVFI…FLAV), 35–55 (VSTA…SVPV), 77–97 (FLNF…LEMI), 110–130 (GIFL…SFMV), 140–160 (IVYG…LAGI), and 176–196 (LGIT…FSGV).

This sequence belongs to the NqrDE/RnfAE family. Composed of six subunits; NqrA, NqrB, NqrC, NqrD, NqrE and NqrF.

The protein localises to the cell inner membrane. The catalysed reaction is a ubiquinone + n Na(+)(in) + NADH + H(+) = a ubiquinol + n Na(+)(out) + NAD(+). In terms of biological role, NQR complex catalyzes the reduction of ubiquinone-1 to ubiquinol by two successive reactions, coupled with the transport of Na(+) ions from the cytoplasm to the periplasm. NqrA to NqrE are probably involved in the second step, the conversion of ubisemiquinone to ubiquinol. The sequence is that of Na(+)-translocating NADH-quinone reductase subunit E from Histophilus somni (strain 2336) (Haemophilus somnus).